The sequence spans 830 residues: AdoMet-dependent rRNA methyltransferase SPB1 (830 aa).

S-adenosyl-L-methionine is bound by residues Gly58, Trp60, Asp78, Asp94, and Asp119. Lys159 acts as the Proton acceptor in catalysis. A coiled-coil region spans residues Leu345 to Met388. Disordered stretches follow at residues Ala485–Asp529 and Glu565–Val642. Acidic residues-rich tracts occupy residues Val516–Asp529, Val591–Phe610, and Asp618–Ala630. Basic and acidic residues predominate over residues Glu631–Val642.

Belongs to the class I-like SAM-binding methyltransferase superfamily. RNA methyltransferase RlmE family. SPB1 subfamily. As to quaternary structure, component of the nucleolar and nucleoplasmic pre-60S ribosomal particle.

The protein localises to the nucleus. It localises to the nucleolus. It catalyses the reaction a ribonucleotide in rRNA + S-adenosyl-L-methionine = a 2'-O-methylribonucleotide in rRNA + S-adenosyl-L-homocysteine + H(+). Its function is as follows. Required for proper assembly of pre-ribosomal particles during the biogenesis of the 60S ribosomal subunit. This chain is AdoMet-dependent rRNA methyltransferase SPB1, found in Eremothecium gossypii (strain ATCC 10895 / CBS 109.51 / FGSC 9923 / NRRL Y-1056) (Yeast).